The following is a 1456-amino-acid chain: ABC transporter G family member 44 (1456 aa).

In terms of domain architecture, ABC transporter 1 spans 169-442 (ANLLHVVPNK…FESMGFKCPD (274 aa)). An ATP-binding site is contributed by 202-209 (GPPGSGKT). The 214-residue stretch at 520–733 (ELLRTCIARE…AMNAIAVNEF (214 aa)) folds into the ABC transmembrane type-2 1 domain. Helical transmembrane passes span 538–558 (FVYR…MTLF), 571–591 (GIVY…NGFS), 626–646 (IPIS…VIGF), 658–678 (LLLL…AALG), 682–702 (VVAN…SGFI), and 768–788 (IGVG…TIAL). The interval 812–844 (NITGETINDPRNSASSGQTTNTRRNAAPGEASE) is disordered. A compositionally biased stretch (polar residues) spans 814-835 (TGETINDPRNSASSGQTTNTRR). Residues 858–1110 (VAFNNIRYSV…DLIEYFEGVE (253 aa)) form the ABC transporter 2 domain. An ATP-binding site is contributed by 903–910 (GVSGAGKT). Positions 1183–1397 (TQCMACLWKQ…TLYGLVASQF (215 aa)) constitute an ABC transmembrane type-2 2 domain. A run of 7 helical transmembrane segments spans residues 1202–1222 (YTVV…TIFW), 1242–1262 (YAAV…VVAV), 1290–1310 (LPYV…MIGF), 1317–1337 (FFWY…YGML), 1347–1367 (IASI…GFVI), 1378–1398 (WYSW…SQFG), and 1425–1445 (FLGV…VSFS).

The protein belongs to the ABC transporter superfamily. ABCG family. PDR (TC 3.A.1.205) subfamily.

Its subcellular location is the membrane. In terms of biological role, may be a general defense protein. The sequence is that of ABC transporter G family member 44 from Oryza sativa subsp. japonica (Rice).